Consider the following 23-residue polypeptide: Septenin 2c (23 aa).

In terms of tissue distribution, expressed in skin granular glands.

It is found in the secreted. Its function is as follows. May act as an antimicrobial peptide. This chain is Septenin 2c, found in Osteopilus septentrionalis (Cuban treefrog).